Reading from the N-terminus, the 816-residue chain is Homeobox-leucine zipper protein ROC9 (816 aa).

Residues 26–104 (VFGRKNGPAA…RRKNYHRHTA (79 aa)) are disordered. Residues 92–101 (KKRRRKNYHR) show a composition bias toward basic residues. A DNA-binding region (homeobox) is located at residues 95–154 (RRKNYHRHTAEQIRIMEALFKESPHPDERQRQQVSKQLGLSARQVKFWFQNRRTQIKAVQ). The stretch at 149–182 (QIKAVQERHENSLLKSELEKLQDEHRAMRELAKK) forms a coiled coil. The interval 265–296 (KSAADGIASPPCSASAGAMQTNSRSPPLHDHD) is disordered. Positions 302–541 (HDDDKPRILE…LQLQCERMVF (240 aa)) constitute an START domain.

This sequence belongs to the HD-ZIP homeobox family. Class IV subfamily.

It is found in the nucleus. In terms of biological role, probable transcription factor. In Oryza sativa subsp. japonica (Rice), this protein is Homeobox-leucine zipper protein ROC9 (ROC9).